The sequence spans 453 residues: Allantoinase (453 aa).

6 residues coordinate Zn(2+): His-59, His-61, Lys-146, His-186, His-242, and Asp-315. Lys-146 is subject to N6-carboxylysine.

The protein belongs to the metallo-dependent hydrolases superfamily. Allantoinase family. In terms of assembly, homotetramer. Zn(2+) is required as a cofactor. Post-translationally, carboxylation allows a single lysine to coordinate two zinc ions.

It catalyses the reaction (S)-allantoin + H2O = allantoate + H(+). It functions in the pathway nitrogen metabolism; (S)-allantoin degradation; allantoate from (S)-allantoin: step 1/1. Its function is as follows. Catalyzes the conversion of allantoin (5-ureidohydantoin) to allantoic acid by hydrolytic cleavage of the five-member hydantoin ring. The sequence is that of Allantoinase from Escherichia coli O139:H28 (strain E24377A / ETEC).